Reading from the N-terminus, the 1017-residue chain is A-type ATP synthase subunit A (1017 aa).

Residues 396–529 form the DOD-type homing endonuclease domain; it reads FLGYLIADGT…FSYLLAKLGI (134 aa).

It belongs to the ATPase alpha/beta chains family. Has multiple subunits with at least A(3), B(3), C, D, E, F, H, I and proteolipid K(x). Post-translationally, this protein undergoes a protein self splicing that involves a post-translational excision of the VDE intervening region (intein) followed by peptide ligation.

Its subcellular location is the cell membrane. It carries out the reaction ATP + H2O + 4 H(+)(in) = ADP + phosphate + 5 H(+)(out). Component of the A-type ATP synthase that produces ATP from ADP in the presence of a proton gradient across the membrane. The A chain is the catalytic subunit. This chain is A-type ATP synthase subunit A, found in Pyrococcus abyssi (strain GE5 / Orsay).